We begin with the raw amino-acid sequence, 303 residues long: Probable 5-dehydro-4-deoxyglucarate dehydratase (303 aa).

The protein belongs to the DapA family.

It carries out the reaction 5-dehydro-4-deoxy-D-glucarate + H(+) = 2,5-dioxopentanoate + CO2 + H2O. The protein operates within carbohydrate acid metabolism; D-glucarate degradation; 2,5-dioxopentanoate from D-glucarate: step 2/2. The sequence is that of Probable 5-dehydro-4-deoxyglucarate dehydratase from Azotobacter vinelandii (strain DJ / ATCC BAA-1303).